The chain runs to 368 residues: N-acetylneuraminate epimerase (368 aa).

Positions 1–19 (MNKTITALAILMASFAANA) are cleaved as a signal peptide. Kelch repeat units follow at residues 40–84 (TVYI…AFID), 86–137 (NLYV…FVHN), 139–173 (KAYV…KINA), 174–219 (HYFD…VNKG), 222–265 (TWLI…VAGG), 287–336 (ENYQ…PWNN), and 338–367 (LLII…VTVQ). The active-site Proton acceptor is the E228.

This sequence belongs to the NanM family. In terms of assembly, homodimer.

Its subcellular location is the periplasm. It carries out the reaction N-acetyl-alpha-neuraminate = N-acetyl-beta-neuraminate. Its function is as follows. Converts alpha-N-acetylneuranimic acid (Neu5Ac) to the beta-anomer, accelerating the equilibrium between the alpha- and beta-anomers. Probably facilitates sialidase-negative bacteria to compete successfully for limited amounts of extracellular Neu5Ac, which is likely taken up in the beta-anomer. In addition, the rapid removal of sialic acid from solution might be advantageous to the bacterium to damp down host responses. In Escherichia coli O157:H7, this protein is N-acetylneuraminate epimerase.